Reading from the N-terminus, the 215-residue chain is MARKTKQEAQETRQHILDVALRLFSQQGVSSTSLGEIAKAAGVTRGAIYWHFKDKSDLFSEIWELSESNIGELELEYQAKFPGDPLSVLREILIHVLESTVTEERRRLLMEIIFHKCEFVGEMAVVQQAQRNLCLESYDRIEQTLKHCIEAKMLPADLMTRRAAIIMRGYISGLMENWLFAPQSFDLKKEARDYVAILLEMYLLCPTLRNPATNE.

Positions 10-70 (QETRQHILDV…EIWELSESNI (61 aa)) constitute an HTH tetR-type domain. A DNA-binding region (H-T-H motif) is located at residues 33-52 (SLGEIAKAAGVTRGAIYWHF).

Potential regulator protein for the acrAB genes. The polypeptide is HTH-type transcriptional regulator AcrR (acrR) (Shigella flexneri).